A 393-amino-acid chain; its full sequence is S-adenosylmethionine synthase (393 aa).

Position 9 (Glu-9) interacts with Mg(2+). His-15 is an ATP binding site. Glu-43 serves as a coordination point for K(+). The L-methionine site is built by Glu-56 and Gln-99. Residues Asp-167–Lys-169, Ser-235–Phe-238, Asp-246, Arg-252–Lys-253, Ala-269, Lys-273, and Lys-277 each bind ATP. Asp-246 is an L-methionine binding site. Lys-277 lines the L-methionine pocket.

It belongs to the AdoMet synthase family. As to quaternary structure, homotetramer. Requires Mn(2+) as cofactor. Mg(2+) is required as a cofactor. Co(2+) serves as cofactor. The cofactor is K(+).

The protein resides in the cytoplasm. It catalyses the reaction L-methionine + ATP + H2O = S-adenosyl-L-methionine + phosphate + diphosphate. It participates in amino-acid biosynthesis; S-adenosyl-L-methionine biosynthesis; S-adenosyl-L-methionine from L-methionine: step 1/1. Functionally, catalyzes the formation of S-adenosylmethionine from methionine and ATP. The reaction comprises two steps that are both catalyzed by the same enzyme: formation of S-adenosylmethionine (AdoMet) and triphosphate, and subsequent hydrolysis of the triphosphate. The polypeptide is S-adenosylmethionine synthase (SAMS) (Litchi chinensis (Lychee)).